The following is a 586-amino-acid chain: Dual specificity tyrosine-phosphorylation-regulated kinase 3 (586 aa).

Over residues 1-13 (MGGAARDRGRKDA) the composition is skewed to basic and acidic residues. The disordered stretch occupies residues 1-187 (MGGAARDRGR…QGVIGGPNNG (187 aa)). One can recognise a Protein kinase domain in the interval 208-521 (YEVLKIIGKG…PAQALRHPWI (314 aa)). ATP is bound by residues 214–222 (IGKGSFGQV), lysine 237, and 287–290 (FELL). Catalysis depends on aspartate 334, which acts as the Proton acceptor. Residue tyrosine 368 is modified to Phosphotyrosine. The Nuclear localization signal signature appears at 467–480 (RSRRGKKRGPPGSK).

The protein belongs to the protein kinase superfamily. CMGC Ser/Thr protein kinase family. MNB/DYRK subfamily. As to quaternary structure, interacts with SIRT1. It depends on Mg(2+) as a cofactor. Ubiquitinated at anaphase by the anaphase-promoting complex (APC/C), leading to its degradation by the proteasome. In terms of processing, protein kinase activity is activated following autophosphorylation at Tyr-368.

It is found in the nucleus. Its subcellular location is the cytoplasm. The protein localises to the nucleus speckle. It localises to the cytoplasmic granule. The protein resides in the cytoskeleton. It is found in the microtubule organizing center. Its subcellular location is the centrosome. It catalyses the reaction L-seryl-[protein] + ATP = O-phospho-L-seryl-[protein] + ADP + H(+). It carries out the reaction L-threonyl-[protein] + ATP = O-phospho-L-threonyl-[protein] + ADP + H(+). The catalysed reaction is L-tyrosyl-[protein] + ATP = O-phospho-L-tyrosyl-[protein] + ADP + H(+). Its activity is regulated as follows. Protein kinase activity is activated following autophosphorylation at Tyr-368. Functionally, dual-specificity protein kinase that promotes disassembly of several types of membraneless organelles during mitosis, such as stress granules, nuclear speckles and pericentriolar material. Dual-specificity tyrosine-regulated kinases (DYRKs) autophosphorylate a critical tyrosine residue in their activation loop and phosphorylate their substrate on serine and threonine residues. Acts as a central dissolvase of membraneless organelles during the G2-to-M transition, after the nuclear-envelope breakdown: acts by mediating phosphorylation of multiple serine and threonine residues in unstructured domains of proteins, such as SRRM1 and PCM1. Does not mediate disassembly of all membraneless organelles: disassembly of P-body and nucleolus is not regulated by DYRK3. Dissolution of membraneless organelles at the onset of mitosis is also required to release mitotic regulators, such as ZNF207, from liquid-unmixed organelles where they are sequestered and keep them dissolved during mitosis. Regulates mTORC1 by mediating the dissolution of stress granules: during stressful conditions, DYRK3 partitions from the cytosol to the stress granule, together with mTORC1 components, which prevents mTORC1 signaling. When stress signals are gone, the kinase activity of DYRK3 is required for the dissolution of stress granule and mTORC1 relocation to the cytosol: acts by mediating the phosphorylation of the mTORC1 inhibitor AKT1S1, allowing full reactivation of mTORC1 signaling. Also acts as a negative regulator of EPO-dependent erythropoiesis: may place an upper limit on red cell production during stress erythropoiesis. Inhibits cell death due to cytokine withdrawal in hematopoietic progenitor cells. Promotes cell survival upon genotoxic stress through phosphorylation of SIRT1: this in turn inhibits p53/TP53 activity and apoptosis. In Mus musculus (Mouse), this protein is Dual specificity tyrosine-phosphorylation-regulated kinase 3.